Consider the following 114-residue polypeptide: Dolichyl-diphosphooligosaccharide--protein glycosyltransferase subunit DAD2 (114 aa).

The Cytoplasmic portion of the chain corresponds to 1-30 (MPKAAGDAKLLIQSLNKAYAATPTNLKIID). Residues 31–51 (LYVVFAVATALVQVVYMGIVG) traverse the membrane as a helical segment. At 52 to 54 (SFP) the chain is on the lumenal side. The chain crosses the membrane as a helical span at residues 55-75 (FNSFLSGVLSSIGTAVLGVCL). Over 76-93 (RIQVNKDNKEFKDLPPER) the chain is Cytoplasmic. Residues 94–114 (AFADFVLCNLVLHLVIMNFLG) form a helical membrane-spanning segment.

This sequence belongs to the DAD/OST2 family. In terms of assembly, component of the oligosaccharyltransferase (OST) complex.

The protein resides in the endoplasmic reticulum membrane. It functions in the pathway protein modification; protein glycosylation. In terms of biological role, subunit of the oligosaccharyl transferase (OST) complex that catalyzes the initial transfer of a defined glycan (Glc(3)Man(9)GlcNAc(2) in eukaryotes) from the lipid carrier dolichol-pyrophosphate to an asparagine residue within an Asn-X-Ser/Thr consensus motif in nascent polypeptide chains, the first step in protein N-glycosylation. N-glycosylation occurs cotranslationally and the complex associates with the Sec61 complex at the channel-forming translocon complex that mediates protein translocation across the endoplasmic reticulum (ER). All subunits are required for a maximal enzyme activity. The sequence is that of Dolichyl-diphosphooligosaccharide--protein glycosyltransferase subunit DAD2 (DAD2) from Hordeum vulgare (Barley).